A 494-amino-acid chain; its full sequence is MRSETDVVVIGAGMGGLAAAIGAAAAGLRVTVVEAGDAPGGKARAVPTPGGPADTGPTVLTMRHVLDALFAACGTRAEEHLTLIPLPRLARHFWPDGSSLDLFTDTEANIEAIRAFAGDKEAAAFRRFDHLTTGLWEAFHRSVIAAPKPDLWRIAAATVTRPQLWPALRPGLTMRDLLAHHFKDPRLAQLFGRYATYVGGRPGATPAVLSLIWQAEVQGVWAIREGMHGVAAALARVAEAKGVRFHYGAKAKRIVRKEGRVTAVEIETGVSIPCGACIFNGDPGALRDGLLGDAARASMEKSPRPAPSLSAWVWAFGATPIGVDLAHHNVFFTADPELEFGPIGAGEMPEEPTLYICAQDREMQAPVPEIERFEIIMNGPAGHQPFPQEEAQCRARTFPMLAAMGLTFSPDPETRALTTPALLSRRFPGSLGAIYGGSPEGTLATFRRPLARTGLKGLYLAGGGTHPGAGVPMALTSGTHAARALLADRISAAK.

Belongs to the carotenoid/retinoid oxidoreductase family.

The enzyme catalyses rhodopin + A = (3E)-3,4-didehydrorhodopin + AH2. The protein operates within carotenoid biosynthesis; spheroidene biosynthesis. Functionally, catalyzes the introduction of C-3,4 double bonds into 1-hydroxyneurosporene (1-HO-Neu) to yield demethylspheroidene (DMS). In Rhodobacter capsulatus (strain ATCC BAA-309 / NBRC 16581 / SB1003), this protein is Hydroxyneurosporene desaturase (crtD).